The sequence spans 924 residues: Isoleucine--tRNA ligase (924 aa).

The 'HIGH' region motif lies at 58 to 68; sequence PYANGQIHVGH. L-isoleucyl-5'-AMP is bound at residue E561. The short motif at 602–606 is the 'KMSKS' region element; it reads KMSKS. Residue K605 coordinates ATP. C887, C890, C907, and C910 together coordinate Zn(2+).

This sequence belongs to the class-I aminoacyl-tRNA synthetase family. IleS type 1 subfamily. In terms of assembly, monomer. Requires Zn(2+) as cofactor.

It is found in the cytoplasm. It carries out the reaction tRNA(Ile) + L-isoleucine + ATP = L-isoleucyl-tRNA(Ile) + AMP + diphosphate. Functionally, catalyzes the attachment of isoleucine to tRNA(Ile). As IleRS can inadvertently accommodate and process structurally similar amino acids such as valine, to avoid such errors it has two additional distinct tRNA(Ile)-dependent editing activities. One activity is designated as 'pretransfer' editing and involves the hydrolysis of activated Val-AMP. The other activity is designated 'posttransfer' editing and involves deacylation of mischarged Val-tRNA(Ile). This is Isoleucine--tRNA ligase from Dichelobacter nodosus (strain VCS1703A).